The following is a 303-amino-acid chain: Acetaldehyde dehydrogenase 1 (303 aa).

The Acyl-thioester intermediate role is filled by C130. NAD(+)-binding positions include 161–169 (SVGPGTRKN) and N272.

It belongs to the acetaldehyde dehydrogenase family.

It catalyses the reaction acetaldehyde + NAD(+) + CoA = acetyl-CoA + NADH + H(+). This Methylibium petroleiphilum (strain ATCC BAA-1232 / LMG 22953 / PM1) protein is Acetaldehyde dehydrogenase 1.